Here is a 280-residue protein sequence, read N- to C-terminus: UPF0494 membrane protein C750.06c (280 aa).

Helical transmembrane passes span 107 to 127 (WPLL…KFEV), 144 to 164 (IWVP…SLIF), 178 to 198 (VIIA…GMII), and 199 to 219 (AALG…LYFG).

The protein belongs to the UPF0494 family.

The protein resides in the cytoplasm. It localises to the vacuole. Its subcellular location is the membrane. The polypeptide is UPF0494 membrane protein C750.06c (Schizosaccharomyces pombe (strain 972 / ATCC 24843) (Fission yeast)).